The chain runs to 374 residues: Glutamate 5-kinase (374 aa).

ATP is bound at residue Lys9. 3 residues coordinate substrate: Ser49, Asp136, and Asn148. ATP-binding positions include 168–169 (TD) and 210–216 (TGGMRSK). A PUA domain is found at 276-354 (SGTITVDSGA…EEARQYSYLH (79 aa)).

It belongs to the glutamate 5-kinase family.

It localises to the cytoplasm. It carries out the reaction L-glutamate + ATP = L-glutamyl 5-phosphate + ADP. It functions in the pathway amino-acid biosynthesis; L-proline biosynthesis; L-glutamate 5-semialdehyde from L-glutamate: step 1/2. Its function is as follows. Catalyzes the transfer of a phosphate group to glutamate to form L-glutamate 5-phosphate. The sequence is that of Glutamate 5-kinase from Geobacillus thermodenitrificans (strain NG80-2).